The chain runs to 211 residues: ATP phosphoribosyltransferase (211 aa).

This sequence belongs to the ATP phosphoribosyltransferase family. Short subfamily. As to quaternary structure, heteromultimer composed of HisG and HisZ subunits.

It localises to the cytoplasm. It catalyses the reaction 1-(5-phospho-beta-D-ribosyl)-ATP + diphosphate = 5-phospho-alpha-D-ribose 1-diphosphate + ATP. Its pathway is amino-acid biosynthesis; L-histidine biosynthesis; L-histidine from 5-phospho-alpha-D-ribose 1-diphosphate: step 1/9. Functionally, catalyzes the condensation of ATP and 5-phosphoribose 1-diphosphate to form N'-(5'-phosphoribosyl)-ATP (PR-ATP). Has a crucial role in the pathway because the rate of histidine biosynthesis seems to be controlled primarily by regulation of HisG enzymatic activity. This is ATP phosphoribosyltransferase from Clostridium botulinum (strain 657 / Type Ba4).